Consider the following 314-residue polypeptide: Triosephosphate isomerase, chloroplastic (314 aa).

Positions 1 to 22 (MAVASTSLASQLSGPKSLSQPY) are enriched in polar residues. The segment at 1 to 25 (MAVASTSLASQLSGPKSLSQPYSGL) is disordered. The N-terminal 59 residues, 1–59 (MAVASTSLASQLSGPKSLSQPYSGLRRSCPKLDQSHSSLFQHLSLSSSSRKASRAVVAM), are a transit peptide targeting the chloroplast. Substrate-binding residues include Asn70 and Lys72. The active-site Electrophile is the His154. The Proton acceptor role is filled by Glu224.

It belongs to the triosephosphate isomerase family. Homodimer.

The protein localises to the plastid. It localises to the chloroplast. It catalyses the reaction D-glyceraldehyde 3-phosphate = dihydroxyacetone phosphate. It participates in carbohydrate biosynthesis; Calvin cycle. This Fragaria ananassa (Strawberry) protein is Triosephosphate isomerase, chloroplastic (TPI).